Consider the following 110-residue polypeptide: MATIFDILNTLNNNNFENCKRQCSTNKSNKTIIDILPPMDVTITNDKLIIETELAGISKDQIEIDIKDSILTIQGERKDLNKQHNNNNNNNNNNNNLVIEKSTSTSSTFR.

The sHSP domain occupies 30–110; the sequence is KTIIDILPPM…KSTSTSSTFR (81 aa). The tract at residues 78–110 is disordered; that stretch reads KDLNKQHNNNNNNNNNNNNLVIEKSTSTSSTFR. Residues 85–96 are compositionally biased toward low complexity; the sequence is NNNNNNNNNNNN. The span at 101–110 shows a compositional bias: polar residues; the sequence is KSTSTSSTFR.

This sequence belongs to the small heat shock protein (HSP20) family.

The chain is Small heat shock protein hspG11 (hspG11) from Dictyostelium discoideum (Social amoeba).